The sequence spans 809 residues: Lethal factor (809 aa).

Residues 1–33 form the signal peptide; it reads MNIKKEFIKVISMSCLVTAITLSGPVFIPLVQG. A disordered region spans residues 39 to 66; sequence DVGMHVKEKEKNKDENKRKDEERNKTQE. Residues 40 to 66 show a composition bias toward basic and acidic residues; that stretch reads VGMHVKEKEKNKDENKRKDEERNKTQE. Residues 60–295 form an i; PA-binding region region; the sequence is ERNKTQEEHL…NLSLEELKDQ (236 aa). Residues 70–282 enclose the ATLF-like 1 domain; it reads KEIMKHIVKI…AFNYMDKFNE (213 aa). Residues 296–330 are IIA; the sequence is RMLARYEKWEKIKQHYQHWSDSLSEEGRGLLKKLQ. Repeat copies occupy residues 315-333, 342-357, 360-378, 380-397, and 399-416. The segment at 315-416 is 5 X approximate repeats; sequence SDSLSEEGRG…EFLKKLKLDI (102 aa). Residues 336–416 form an III region; it reads KKDDIIHSLS…EFLKKLKLDI (81 aa). Positions 420 to 583 are IIB; sequence DINQRLQDTG…EYIRIDAKVV (164 aa). The interval 585-809 is IV; that stretch reads KSKIDTKIQE…NDQIKFIINS (225 aa). Residues 609-804 enclose the ATLF-like 2 domain; it reads LPKYTKLITF…TFQFINDQIK (196 aa). Histidine 719 contacts Zn(2+). Glutamate 720 acts as the Proton acceptor in catalysis. Zn(2+) is bound by residues histidine 723, tyrosine 761, and glutamate 768.

This sequence belongs to the peptidase M34 family. Interacts (via ATLF domain 1) with the cleaved form of protective antigen (PA-63) anthrax toxin; interaction is required for LF translocation into the host cytoplasm. Interacts with PA-63 homooligomers (either homoheptamers or homooctamers): three molecules of LF bind the PA-63 homoheptamer to form the PA(7)LF(3) complex, in which the relative position of the N-terminal alpha-helices in the three LFs determines which factor is translocated first. The cofactor is Zn(2+).

The protein resides in the secreted. It is found in the host cytoplasm. Its subcellular location is the host cytosol. It carries out the reaction Preferred amino acids around the cleavage site can be denoted BBBBxHx-|-H, in which B denotes Arg or Lys, H denotes a hydrophobic amino acid, and x is any amino acid. The only known protein substrates are mitogen-activated protein (MAP) kinase kinases.. Its activity is regulated as follows. Inhibited by NSC-12155 (1,3-Bis(2-methyl-4-aminoquinoline-6-yl)ure). Inhibited by phenoxyacetic acid bearing alpha-benzyl substituents on the C2-side chain. Inhibited by sulfonamide hydroxamate with benzylic additions at the sulfonamide nitrogen. Also inhibited by sulfonamide hydroxamates with alkylation at the sulfonamide nitrogen. Inhibited by hydroxamic acid inhibitors. Lethal factor (LF), which constitutes one of the three proteins composing the anthrax toxin, is able to trigger rapid cell death in macrophages. Acts as a protease that cleaves the N-terminal of most dual specificity mitogen-activated protein kinase kinases (MAPKKs or MAP2Ks) (except for MAP2K5): cleavage invariably occurs within the N-terminal proline-rich region preceding the kinase domain, thus disrupting a sequence involved in directing specific protein-protein interactions necessary for the assembly of signaling complexes. Also cleaves mouse Nlrp1b: host Nlrp1b cleavage promotes ubiquitination and degradation of the N-terminal part of Nlrp1b by the proteasome, thereby releasing the cleaved C-terminal part of Nlrp1b, which polymerizes and forms the Nlrp1b inflammasome followed by host cell pyroptosis. Able to cleave mouse Nlrp1b alleles 1 and 5, while it is not able to cleave Nlrp1b alleles 2, 3 and 4. In contrast, does not cleave NLRP1 human ortholog. LF is not toxic by itself and only acts as a lethal factor when associated with protective antigen (PA) to form the lethal toxin (LeTx): PA is required for LF translocation into the host cytosol. This Bacillus anthracis protein is Lethal factor.